Here is a 160-residue protein sequence, read N- to C-terminus: Deoxyuridine 5'-triphosphate nucleotidohydrolase (160 aa).

The dUMP site is built by S80, G93, D96, Y99, K104, R149, F154, and G155.

The protein belongs to the dUTPase family. Homotrimer. Mg(2+) serves as cofactor.

The enzyme catalyses dUTP + H2O = dUMP + diphosphate + H(+). The protein operates within pyrimidine metabolism; dUMP biosynthesis; dUMP from dCTP (dUTP route): step 2/2. Functionally, involved in nucleotide metabolism via production of dUMP, the immediate precursor of thymidine nucleotides, and decreases the intracellular concentration of dUTP so that uracil cannot be incorporated into DNA. The polypeptide is Deoxyuridine 5'-triphosphate nucleotidohydrolase (DUT1) (Debaryomyces hansenii (strain ATCC 36239 / CBS 767 / BCRC 21394 / JCM 1990 / NBRC 0083 / IGC 2968) (Yeast)).